Reading from the N-terminus, the 441-residue chain is tRNA modification GTPase MnmE (441 aa).

The (6S)-5-formyl-5,6,7,8-tetrahydrofolate site is built by arginine 23, glutamate 81, and lysine 121. Residues 218–363 form the TrmE-type G domain; that stretch reads GFRVAIVGPP…LESWIAAFVS (146 aa). Asparagine 228 provides a ligand contact to K(+). GTP-binding positions include 228-233, 247-253, 272-275, and 326-329; these read NAGKSS, TDIAGTT, DTAG, and NKAD. A Mg(2+)-binding site is contributed by serine 232. Positions 247, 249, and 252 each coordinate K(+). Threonine 253 is a Mg(2+) binding site. Lysine 441 is a (6S)-5-formyl-5,6,7,8-tetrahydrofolate binding site.

This sequence belongs to the TRAFAC class TrmE-Era-EngA-EngB-Septin-like GTPase superfamily. TrmE GTPase family. In terms of assembly, homodimer. Heterotetramer of two MnmE and two MnmG subunits. K(+) serves as cofactor.

The protein localises to the cytoplasm. In terms of biological role, exhibits a very high intrinsic GTPase hydrolysis rate. Involved in the addition of a carboxymethylaminomethyl (cmnm) group at the wobble position (U34) of certain tRNAs, forming tRNA-cmnm(5)s(2)U34. The sequence is that of tRNA modification GTPase MnmE from Hyphomonas neptunium (strain ATCC 15444).